The chain runs to 330 residues: Ribosomal RNA small subunit methyltransferase H (330 aa).

Residues 48–50, Asp67, Leu101, Asp115, and Gln122 each bind S-adenosyl-L-methionine; that span reads GGH.

It belongs to the methyltransferase superfamily. RsmH family.

Its subcellular location is the cytoplasm. The enzyme catalyses cytidine(1402) in 16S rRNA + S-adenosyl-L-methionine = N(4)-methylcytidine(1402) in 16S rRNA + S-adenosyl-L-homocysteine + H(+). Specifically methylates the N4 position of cytidine in position 1402 (C1402) of 16S rRNA. The polypeptide is Ribosomal RNA small subunit methyltransferase H (Pseudarthrobacter chlorophenolicus (strain ATCC 700700 / DSM 12829 / CIP 107037 / JCM 12360 / KCTC 9906 / NCIMB 13794 / A6) (Arthrobacter chlorophenolicus)).